A 61-amino-acid chain; its full sequence is Large ribosomal subunit protein bL28 (61 aa).

Residues 1-26 (MAKDFLNGKRTHFGNKRSHALNSSRR) are disordered. Over residues 9 to 19 (KRTHFGNKRSH) the composition is skewed to basic residues.

This sequence belongs to the bacterial ribosomal protein bL28 family.

This is Large ribosomal subunit protein bL28 from Levilactobacillus brevis (strain ATCC 367 / BCRC 12310 / CIP 105137 / JCM 1170 / LMG 11437 / NCIMB 947 / NCTC 947) (Lactobacillus brevis).